Consider the following 125-residue polypeptide: Basic leucine zipper transcriptional factor ATF-like (125 aa).

The segment covering 1–14 (MPHSSDSSDSSFSR) has biased composition (low complexity). The disordered stretch occupies residues 1–58 (MPHSSDSSDSSFSRSPPPGKQDSSDDVRRVQRREKNRIAAQKSRQRQTQKADTLHLES). The bZIP domain occupies 26-89 (DVRRVQRREK…KYFTSVLNSH (64 aa)). A basic motif region spans residues 28-50 (RRVQRREKNRIAAQKSRQRQTQK). Ser43 carries the phosphoserine modification. The residue at position 48 (Thr48) is a Phosphothreonine. Residues 54–75 (LHLESEDLEKQNAALRKEIKQL) form a leucine-zipper region.

The protein belongs to the bZIP family. Heterodimer; mainly heterodimerizes with JUNB. The BATF-JUNB heterodimer interacts with IRF4 and IRF8. Interacts (via bZIP domain) with IRF4 and IRF8; the interaction is direct. Also forms heterodimers with JUN and JUND. Also interacts with IFI35. In terms of processing, phosphorylated on serine and threonine residues and at least one tyrosine residue. Phosphorylation at Ser-43 inhibit DNA binding activity and transforms it as a negative regulator of AP-1 mediated transcription. Post-translationally, phosphorylated. Expressed at highest levels in lung, and at lower levels in placenta, liver, kidney, spleen, and peripheral blood. Detected in SW480 colorectal cancer cell line and several hematopoietic tumor cell lines, including Raji Burkitt's lymphoma. Strongly expressed in mature B- and T-lymphocytes. Also expressed in moderate levels in lymph node and appendix and at low levels in thymus and bone marrow.

Its subcellular location is the nucleus. It localises to the cytoplasm. AP-1 family transcription factor that controls the differentiation of lineage-specific cells in the immune system: specifically mediates the differentiation of T-helper 17 cells (Th17), follicular T-helper cells (TfH), CD8(+) dendritic cells and class-switch recombination (CSR) in B-cells. Acts via the formation of a heterodimer with JUNB that recognizes and binds DNA sequence 5'-TGA[CG]TCA-3'. The BATF-JUNB heterodimer also forms a complex with IRF4 (or IRF8) in immune cells, leading to recognition of AICE sequence (5'-TGAnTCA/GAAA-3'), an immune-specific regulatory element, followed by cooperative binding of BATF and IRF4 (or IRF8) and activation of genes. Controls differentiation of T-helper cells producing interleukin-17 (Th17 cells) by binding to Th17-associated gene promoters: regulates expression of the transcription factor RORC itself and RORC target genes such as IL17 (IL17A or IL17B). Also involved in differentiation of follicular T-helper cells (TfH) by directing expression of BCL6 and MAF. In B-cells, involved in class-switch recombination (CSR) by controlling the expression of both AICDA and of germline transcripts of the intervening heavy-chain region and constant heavy-chain region (I(H)-C(H)). Following infection, can participate in CD8(+) dendritic cell differentiation via interaction with IRF4 and IRF8 to mediate cooperative gene activation. Regulates effector CD8(+) T-cell differentiation by regulating expression of SIRT1. Following DNA damage, part of a differentiation checkpoint that limits self-renewal of hematopoietic stem cells (HSCs): up-regulated by STAT3, leading to differentiation of HSCs, thereby restricting self-renewal of HSCs. The protein is Basic leucine zipper transcriptional factor ATF-like (BATF) of Homo sapiens (Human).